A 307-amino-acid chain; its full sequence is Streptomycin 6-kinase (307 aa).

133 to 145 is a binding site for streptomycin; that stretch reads LAGLLNRLHSVPA. The active-site Proton acceptor is aspartate 201.

It belongs to the aminoglycoside phosphotransferase family.

The catalysed reaction is streptomycin + ATP = streptomycin 6-phosphate + ADP + H(+). Functionally, the aminoglycoside phosphotransferases achieve inactivation of their antibiotic substrates by phosphorylation. This Streptomyces griseus protein is Streptomycin 6-kinase (aphD).